Consider the following 83-residue polypeptide: Small ribosomal subunit protein eS21 (83 aa).

Belongs to the eukaryotic ribosomal protein eS21 family. As to quaternary structure, component of the 40S small ribosomal subunit.

It is found in the cytoplasm. It localises to the cytosol. The protein localises to the rough endoplasmic reticulum. The protein is Small ribosomal subunit protein eS21 (RpS21) of Spodoptera frugiperda (Fall armyworm).